Reading from the N-terminus, the 140-residue chain is Extracellular globin-1 (140 aa).

Residues 1–140 (ECDVLERFKV…YDFIASGIKP (140 aa)) form the Globin domain. A disulfide bridge links cysteine 2 with cysteine 130. Histidine 93 lines the heme b pocket.

This sequence belongs to the globin family. As to quaternary structure, the giant hemoglobins of worms are formed of a monomeric subunit and a disulfide-bonded trimer. This subunit is monomeric.

It localises to the secreted. The polypeptide is Extracellular globin-1 (Metaphire hilgendorfi (Earthworm)).